The following is a 324-amino-acid chain: uncharacterized protein (324 aa).

This is an uncharacterized protein from Dryophytes versicolor (chameleon treefrog).